Here is a 794-residue protein sequence, read N- to C-terminus: Phosphoribosylformylglycinamidine synthase subunit PurL (794 aa).

The active site involves H47. ATP-binding residues include Y50 and K89. E91 contacts Mg(2+). Substrate is bound by residues 92-95 and R114; that span reads SHNH. Residue H93 is the Proton acceptor of the active site. Residue D115 coordinates Mg(2+). Q238 lines the substrate pocket. D266 provides a ligand contact to Mg(2+). 310–312 provides a ligand contact to substrate; the sequence is ESQ. ATP-binding residues include D522 and G559. N560 is a binding site for Mg(2+). S562 contacts substrate.

The protein belongs to the FGAMS family. As to quaternary structure, monomer. Part of the FGAM synthase complex composed of 1 PurL, 1 PurQ and 2 PurS subunits.

Its subcellular location is the cytoplasm. It catalyses the reaction N(2)-formyl-N(1)-(5-phospho-beta-D-ribosyl)glycinamide + L-glutamine + ATP + H2O = 2-formamido-N(1)-(5-O-phospho-beta-D-ribosyl)acetamidine + L-glutamate + ADP + phosphate + H(+). Its pathway is purine metabolism; IMP biosynthesis via de novo pathway; 5-amino-1-(5-phospho-D-ribosyl)imidazole from N(2)-formyl-N(1)-(5-phospho-D-ribosyl)glycinamide: step 1/2. Functionally, part of the phosphoribosylformylglycinamidine synthase complex involved in the purines biosynthetic pathway. Catalyzes the ATP-dependent conversion of formylglycinamide ribonucleotide (FGAR) and glutamine to yield formylglycinamidine ribonucleotide (FGAM) and glutamate. The FGAM synthase complex is composed of three subunits. PurQ produces an ammonia molecule by converting glutamine to glutamate. PurL transfers the ammonia molecule to FGAR to form FGAM in an ATP-dependent manner. PurS interacts with PurQ and PurL and is thought to assist in the transfer of the ammonia molecule from PurQ to PurL. The polypeptide is Phosphoribosylformylglycinamidine synthase subunit PurL (Prochlorococcus marinus (strain MIT 9313)).